The following is a 90-amino-acid chain: uncharacterized protein (90 aa).

Residues 25-90 are disordered; it reads GEAAYNSPTN…PPIAPPPILD (66 aa). Polar residues-rich tracts occupy residues 30-54 and 65-79; these read NSPT…TESV and NDQT…SNVN.

This is an uncharacterized protein from Bacillus subtilis (strain 168).